A 948-amino-acid chain; its full sequence is MTMSDIEDSDVENYDIAGKLALRSDDELGSDDEQNTSGEEGEEVELQDEIVSSDDDDDDGDKGKDTGKMPPTKKAKLDRKPGSDFDFASLDFEAEDNEEEDKTLSSILALSNPTAKKAKAGSFASFGFSKFLLANIAKKGYKQPTPIQRRSIPLIIDNRDVVGMARTGSGKTAAFVLPLIEKLKLRSPSGVRAVILSPSRELALQTYKQVKEFSHGTNLQSIVLIGGDSLEEDFGKMMTKPDIIVCTPGRFLHLKVEMQYDLMSVQYIVFDEADRLFEMGFAEQLNELLLALPSNRQSLLFSATLPRSLVEFAKAGLTNPVLVRLDADSKLSENLQMAYFTTKRNEREANLLYILQEVIKMPLGTPEEVKKLAAMDKRSIESDEENEEAKEQNNGKKRKYKFKKERMPSAKELPSEKSTIIFVPTKHHVEYVTSLLKDAGYLVSYIYGTLDQHARKNQLYLFRIGLTKILVVTDVAARGIDIPVLANVINFTLPGSSKIFIHRVGRTARAGNKGWAYSIVNSSELPYLLDLEIFLGKKLLLTSMHEAKCELLKKKQGGSFIPPRINYTERLVVGAIPRLDLETFQELYENLLRNNYEIKVLKDVAAKGEKLYHRTRQPASQESLKRSKEILETNSWDDQHLLFGENLEKMKDDFLAKLQNRNVKETVFELKKKGVKENDSLAEFMHRRRRQLAPIQRKAQERKELLQKERLAGLSHGIEEEVLKIDGEASGYNQNVDEAELQETFELGDEAHNKKKTFKDPQFFMSHYAPASVIQDQQLSIASSFANDAQAATFDLDNDDKLQKNKQQVMKWDKKKGKYINSMSTDKKYIISENGTKIPATFRSGKFDEWRKQRNLKPTSSLTNNETPENNKRFKHKKQSVPKLPDKYRDDYHKQKQKVEKALDSGMRVKGYNKPGMQQELKSTEQIRKARAIKEQRRAKNARPSRRK.

Composition is skewed to acidic residues over residues 1 to 13 and 27 to 60; these read MTMS…DVEN and ELGS…DDDG. The tract at residues 1-80 is disordered; that stretch reads MTMSDIEDSD…PTKKAKLDRK (80 aa). A Q motif motif is present at residues 121-149; the sequence is GSFASFGFSKFLLANIAKKGYKQPTPIQR. In terms of domain architecture, Helicase ATP-binding spans 152-323; that stretch reads IPLIIDNRDV…KAGLTNPVLV (172 aa). 165-172 lines the ATP pocket; it reads ARTGSGKT. The DEAD box motif lies at 271–274; it reads DEAD. 2 disordered regions span residues 378-408 and 849-948; these read RSIE…ERMP and EWRK…SRRK. The segment covering 395–404 has biased composition (basic residues); it reads GKKRKYKFKK. Positions 395–552 constitute a Helicase C-terminal domain; it reads GKKRKYKFKK…SMHEAKCELL (158 aa). Positions 856–868 are enriched in polar residues; sequence LKPTSSLTNNETP. Composition is skewed to basic and acidic residues over residues 884–903 and 922–938; these read LPDK…EKAL and KSTE…EQRR. Basic residues predominate over residues 939 to 948; it reads AKNARPSRRK.

Belongs to the DEAD box helicase family. DDX54/DBP10 subfamily.

It is found in the nucleus. The protein resides in the nucleolus. The enzyme catalyses ATP + H2O = ADP + phosphate + H(+). Its function is as follows. ATP-binding RNA helicase involved in the biogenesis of 60S ribosomal subunits and is required for the normal formation of 25S and 5.8S rRNAs. This is ATP-dependent RNA helicase DBP10 (DBP10) from Lodderomyces elongisporus (strain ATCC 11503 / CBS 2605 / JCM 1781 / NBRC 1676 / NRRL YB-4239) (Yeast).